The following is a 507-amino-acid chain: ATP synthase subunit alpha, chloroplastic (507 aa).

Residue 170–177 (GDRQTGKT) coordinates ATP.

Belongs to the ATPase alpha/beta chains family. In terms of assembly, F-type ATPases have 2 components, CF(1) - the catalytic core - and CF(0) - the membrane proton channel. CF(1) has five subunits: alpha(3), beta(3), gamma(1), delta(1), epsilon(1). CF(0) has four main subunits: a, b, b' and c.

The protein resides in the plastid. It localises to the chloroplast thylakoid membrane. It catalyses the reaction ATP + H2O + 4 H(+)(in) = ADP + phosphate + 5 H(+)(out). Functionally, produces ATP from ADP in the presence of a proton gradient across the membrane. The alpha chain is a regulatory subunit. The protein is ATP synthase subunit alpha, chloroplastic of Morus indica (Mulberry).